Here is a 581-residue protein sequence, read N- to C-terminus: Prolactin receptor (581 aa).

The N-terminal stretch at 1–24 (MKENVASRAVFILLLFLNASLLNG) is a signal peptide. Over 25–234 (QSPPGKPKII…QIPNDFPVND (210 aa)) the chain is Extracellular. Fibronectin type-III domains lie at 27-127 (PPGK…IVEP) and 129-229 (PPAN…IPND). C36 and C46 are oxidised to a cystine. The N-linked (GlcNAc...) asparagine glycan is linked to N59. The cysteines at positions 75 and 86 are disulfide-linked. N-linked (GlcNAc...) asparagine glycosylation is present at N132. Zn(2+)-binding residues include D211 and H212. The short motif at 215–219 (WSEWS) is the WSXWS motif element. An N-linked (GlcNAc...) asparagine glycan is attached at N233. Residues 235–258 (TTVWIFVAVLSAVICLIMVWAVAL) traverse the membrane as a helical segment. Over 259–581 (KGYSMMTCIL…PAKEAPPALP (323 aa)) the chain is Cytoplasmic. Positions 267–275 (ILPPVPGPK) match the Box 1 motif motif. 2 disordered regions span residues 321-362 (EDQQ…LFSE) and 462-502 (LKPS…QDKT). Residues 329–349 (PSKEHMEQGVKPMHMDPDSDS) are compositionally biased toward basic and acidic residues.

Belongs to the type I cytokine receptor family. Type 1 subfamily. Interacts with SMARCA1. Interacts with NEK3 and VAV2 and this interaction is prolactin-dependent.

Its subcellular location is the membrane. In terms of biological role, this is a receptor for the anterior pituitary hormone prolactin. This chain is Prolactin receptor (PRLR), found in Cervus elaphus (Red deer).